The sequence spans 100 residues: Small ribosomal subunit protein bS6 (100 aa).

It belongs to the bacterial ribosomal protein bS6 family.

Binds together with bS18 to 16S ribosomal RNA. The chain is Small ribosomal subunit protein bS6 from Enterococcus faecalis (strain ATCC 700802 / V583).